We begin with the raw amino-acid sequence, 224 residues long: Iron-sulfur cluster repair protein ScdA (224 aa).

It belongs to the RIC family. ScdA subfamily. As to quaternary structure, homodimer.

It localises to the cytoplasm. In terms of biological role, di-iron-containing protein involved in the repair of iron-sulfur clusters damaged by oxidative and nitrosative stress conditions. The chain is Iron-sulfur cluster repair protein ScdA from Staphylococcus epidermidis (strain ATCC 35984 / DSM 28319 / BCRC 17069 / CCUG 31568 / BM 3577 / RP62A).